We begin with the raw amino-acid sequence, 295 residues long: Protein shisa-2 homolog (295 aa).

Positions 1 to 33 are cleaved as a signal peptide; it reads MWGARRSSVSSSWNAASLLQLLLAALLAAGARA. Residues 34–110 are Extracellular-facing; sequence SGEYCHGWLD…RADKDGPDGS (77 aa). The segment at 87 to 108 is disordered; sequence GCDNDRQQGAGEPGRADKDGPD. Residues 111–131 form a helical membrane-spanning segment; the sequence is AVPIYVPFLIVGSVFVAFIIL. At 132 to 295 the chain is on the cytoplasmic side; it reads GSLVAACCCR…EQKMYPAVTV (164 aa). Residues 168–205 form a disordered region; that stretch reads PSASTSRGSSSRQSSTAASSSSSANSGARAPPTRSQTN. Low complexity predominate over residues 169–197; it reads SASTSRGSSSRQSSTAASSSSSANSGARA.

This sequence belongs to the shisa family.

The protein resides in the endoplasmic reticulum membrane. In terms of biological role, plays an essential role in the maturation of presomitic mesoderm cells by individual attenuation of both FGF and WNT signaling. The chain is Protein shisa-2 homolog (SHISA2) from Homo sapiens (Human).